A 54-amino-acid chain; its full sequence is ATP synthase protein 8 (54 aa).

Residues 9–29 (WIINFFIVWTADFTLLIVLSI) form a helical membrane-spanning segment.

This sequence belongs to the ATPase protein 8 family. As to quaternary structure, F-type ATPases have 2 components, CF(1) - the catalytic core - and CF(0) - the membrane proton channel.

It localises to the mitochondrion membrane. Mitochondrial membrane ATP synthase (F(1)F(0) ATP synthase or Complex V) produces ATP from ADP in the presence of a proton gradient across the membrane which is generated by electron transport complexes of the respiratory chain. F-type ATPases consist of two structural domains, F(1) - containing the extramembraneous catalytic core and F(0) - containing the membrane proton channel, linked together by a central stalk and a peripheral stalk. During catalysis, ATP synthesis in the catalytic domain of F(1) is coupled via a rotary mechanism of the central stalk subunits to proton translocation. Part of the complex F(0) domain. Minor subunit located with subunit a in the membrane. This Arbacia lixula (Black urchin) protein is ATP synthase protein 8 (MT-ATP8).